Reading from the N-terminus, the 461-residue chain is Protein FAM124B (461 aa).

Serine 49 carries the post-translational modification Phosphoserine. Residues 302–346 (VELPEPGGRPVSDGSSNTWWKSAGGSAQPSSPATESQPQLSSLHL) are disordered. Residues 323–334 (SAGGSAQPSSPA) show a composition bias toward low complexity.

This sequence belongs to the FAM124 family. As to quaternary structure, interacts with CHD7 and CHD8.

Its subcellular location is the nucleus. The polypeptide is Protein FAM124B (FAM124B) (Bos taurus (Bovine)).